The following is a 236-amino-acid chain: Urease accessory protein UreG 2 (236 aa).

The segment at 1–40 (MEASVHIGNSVPHAHLHSAAPARPADPVRPDGSRRALRIG) is disordered. 43 to 50 (GPVGSGKT) is a GTP binding site.

Belongs to the SIMIBI class G3E GTPase family. UreG subfamily. In terms of assembly, homodimer. UreD, UreF and UreG form a complex that acts as a GTP-hydrolysis-dependent molecular chaperone, activating the urease apoprotein by helping to assemble the nickel containing metallocenter of UreC. The UreE protein probably delivers the nickel.

It is found in the cytoplasm. Its function is as follows. Facilitates the functional incorporation of the urease nickel metallocenter. This process requires GTP hydrolysis, probably effectuated by UreG. This is Urease accessory protein UreG 2 from Saccharopolyspora erythraea (strain ATCC 11635 / DSM 40517 / JCM 4748 / NBRC 13426 / NCIMB 8594 / NRRL 2338).